The primary structure comprises 342 residues: Deoxyguanosinetriphosphate triphosphohydrolase-like protein (342 aa).

One can recognise an HD domain in the interval 75–190 (RLVHTLEVSQ…VRFADKIAYV (116 aa)).

Belongs to the dGTPase family. Type 2 subfamily.

In Clostridium perfringens (strain SM101 / Type A), this protein is Deoxyguanosinetriphosphate triphosphohydrolase-like protein.